We begin with the raw amino-acid sequence, 820 residues long: Scavenger receptor class F member 1 (820 aa).

The N-terminal stretch at Met1–Gly23 is a signal peptide. The Extracellular segment spans residues Ser24–Asn422. 4 consecutive EGF-like domains span residues Thr56 to Ser90, Trp98 to Glu133, Arg163 to Ser193, and Trp217 to Glu251. Cystine bridges form between Cys60-Cys72, Cys66-Cys78, Cys80-Cys89, Cys102-Cys114, Cys108-Cys121, Cys123-Cys132, Cys166-Cys174, Cys168-Cys181, Cys183-Cys192, Cys221-Cys232, Cys225-Cys239, and Cys241-Cys250. The N-linked (GlcNAc...) asparagine glycan is linked to Asn291. EGF-like domains follow at residues Phe304 to Glu341 and Cys353 to Asn384. A helical transmembrane segment spans residues Ala423–Ala443. Residues Tyr444 to His820 lie on the Cytoplasmic side of the membrane. Disordered stretches follow at residues Pro549–Ser685 and Asn715–His820. A phosphoserine mark is found at Ser590 and Ser607. The span at Gln631–Ala648 shows a compositional bias: acidic residues. Positions Thr650–Gly662 are enriched in polar residues.

In terms of assembly, heterophilic interaction with SREC2 via its extracellular domain. The heterophilic interaction is suppressed by the presence of ligand such as Ac-LDL. Interacts with AVIL; the interaction occurs in embryonic dorsal root ganglions at 18 dpc and induces neurite-like outgrowth. Expressed weakly in brain, spinal cord and dorsal root ganglions.

It localises to the membrane. Its function is as follows. Mediates the binding and degradation of acetylated low density lipoprotein (Ac-LDL). Mediates heterophilic interactions, suggesting a function as adhesion protein. Plays a role in the regulation of neurite-like outgrowth. The protein is Scavenger receptor class F member 1 (Scarf1) of Mus musculus (Mouse).